A 922-amino-acid chain; its full sequence is Translation initiation factor IF-2 (922 aa).

The tract at residues 243-329 (AAREAAKLAE…GKSKSGQEET (87 aa)) is disordered. Residues 250–264 (LAEAQKAAAPAPAAP) show a composition bias toward low complexity. Over residues 267-298 (KTLHKPDKPAAAKGAKGPDKKPAGAWKDDAAR) the composition is skewed to basic and acidic residues. Residues 422–589 (ARPPVVTVMG…AILLQAEVLE (168 aa)) enclose the tr-type G domain. The interval 431–438 (GHVDHGKT) is G1. 431–438 (GHVDHGKT) is a GTP binding site. A G2 region spans residues 456–460 (GITQH). The interval 477 to 480 (DTPG) is G3. GTP-binding positions include 477-481 (DTPGH) and 531-534 (NKID). The interval 531–534 (NKID) is G4. Residues 567 to 569 (SAK) form a G5 region.

Belongs to the TRAFAC class translation factor GTPase superfamily. Classic translation factor GTPase family. IF-2 subfamily.

Its subcellular location is the cytoplasm. One of the essential components for the initiation of protein synthesis. Protects formylmethionyl-tRNA from spontaneous hydrolysis and promotes its binding to the 30S ribosomal subunits. Also involved in the hydrolysis of GTP during the formation of the 70S ribosomal complex. In Thiobacillus denitrificans (strain ATCC 25259 / T1), this protein is Translation initiation factor IF-2.